The following is a 223-amino-acid chain: Transcriptional regulatory protein HprR (223 aa).

The Response regulatory domain occupies Lys2–Leu115. A 4-aspartylphosphate modification is found at Asp51. The ompR/PhoB-type DNA-binding region spans Asn122–Ala220.

Post-translationally, phosphorylated by HprS.

The protein localises to the cytoplasm. In terms of biological role, member of a two-component regulatory system HprR/HprS involved in response to hydrogen peroxide. Regulates the expression of at least 5 operons, cyoABCDE, hprRS, hiuH, cusRS and cusCFBA. Bifunctional regulator that acts as an activator and a repressor. This is Transcriptional regulatory protein HprR from Escherichia coli (strain K12).